Here is a 440-residue protein sequence, read N- to C-terminus: Gap junction alpha-8 protein (440 aa).

An intramembrane segment occupies 2–12 (GDWSFLGNILE). Topologically, residues 13–21 (EVNEHSTVI) are cytoplasmic. Residues 22-42 (GRVWLTVLFIFRILILGTAAE) form a helical membrane-spanning segment. The Extracellular portion of the chain corresponds to 43–71 (FVWGDEQSDFVCNTQQPGCENVCYDEAFP). 3 cysteine pairs are disulfide-bonded: cysteine 54/cysteine 201, cysteine 61/cysteine 195, and cysteine 65/cysteine 190. A helical membrane pass occupies residues 72 to 92 (ISHIRLWVLQIIFVSTPSLMY). Residues 93–161 (VGHAVHHVRM…GTLLRTYVCH (69 aa)) lie on the Cytoplasmic side of the membrane. The disordered stretch occupies residues 111–143 (AEELCQQSRSNGGERVPIAPDQASIRKSSSSSK). The helical transmembrane segment at 162-182 (IIFKTLFEVGFIVGHYFLYGF) threads the bilayer. Over 183–210 (RILPLYRCSRWPCPNVVDCFVSRPTEKT) the chain is Extracellular. The helical transmembrane segment at 211–231 (IFILFMLSVAFVSLFLNIMEM) threads the bilayer. The Cytoplasmic portion of the chain corresponds to 232-440 (SHLGMKGIRS…SRARSDDLTI (209 aa)). Residues 334-440 (GAQEVEREEQ…SRARSDDLTI (107 aa)) are disordered. Basic and acidic residues-rich tracts occupy residues 353-364 (VGEKKQEAEKVA) and 375-399 (DGEKVETPGVGKDDEKEELQAEKVT). Residues 423–432 (LSRLSKASSR) are compositionally biased toward low complexity.

This sequence belongs to the connexin family. Alpha-type (group II) subfamily. A hemichannel or connexon is composed of a hexamer of connexins. A functional gap junction is formed by the apposition of two hemichannels. Forms heteromeric channels with GJA3. In terms of tissue distribution, detected in eye lens (at protein level).

The protein localises to the cell membrane. The protein resides in the cell junction. It localises to the gap junction. Functionally, structural component of eye lens gap junctions. Gap junctions are dodecameric channels that connect the cytoplasm of adjoining cells. They are formed by the docking of two hexameric hemichannels, one from each cell membrane. Small molecules and ions diffuse from one cell to a neighboring cell via the central pore. This is Gap junction alpha-8 protein (Gja8) from Rattus norvegicus (Rat).